The primary structure comprises 212 residues: Thymidylate kinase (212 aa).

An ATP-binding site is contributed by 7 to 14 (GIEGSGKS).

This sequence belongs to the thymidylate kinase family.

It carries out the reaction dTMP + ATP = dTDP + ADP. In terms of biological role, phosphorylation of dTMP to form dTDP in both de novo and salvage pathways of dTTP synthesis. This is Thymidylate kinase from Oleidesulfovibrio alaskensis (strain ATCC BAA-1058 / DSM 17464 / G20) (Desulfovibrio alaskensis).